Reading from the N-terminus, the 193-residue chain is Ion-translocating oxidoreductase complex subunit A (193 aa).

The next 6 helical transmembrane spans lie at 5–25, 39–59, 62–82, 102–122, 134–154, and 171–191; these read LLLF…FLGL, IGMG…AWMV, FILL…LVIA, LLGI…VALL, AVYG…FAAI, and SIAL…TGLV.

Belongs to the NqrDE/RnfAE family. In terms of assembly, the complex is composed of six subunits: RnfA, RnfB, RnfC, RnfD, RnfE and RnfG.

It localises to the cell inner membrane. Part of a membrane-bound complex that couples electron transfer with translocation of ions across the membrane. This Yersinia pestis bv. Antiqua (strain Nepal516) protein is Ion-translocating oxidoreductase complex subunit A.